A 498-amino-acid chain; its full sequence is ATP synthase subunit beta, chloroplastic (498 aa).

172–179 lines the ATP pocket; the sequence is GGAGVGKT.

The protein belongs to the ATPase alpha/beta chains family. In terms of assembly, F-type ATPases have 2 components, CF(1) - the catalytic core - and CF(0) - the membrane proton channel. CF(1) has five subunits: alpha(3), beta(3), gamma(1), delta(1), epsilon(1). CF(0) has four main subunits: a(1), b(1), b'(1) and c(9-12).

The protein localises to the plastid. It is found in the chloroplast thylakoid membrane. It catalyses the reaction ATP + H2O + 4 H(+)(in) = ADP + phosphate + 5 H(+)(out). Produces ATP from ADP in the presence of a proton gradient across the membrane. The catalytic sites are hosted primarily by the beta subunits. The sequence is that of ATP synthase subunit beta, chloroplastic from Salacca zalacca (Snake palm).